The following is a 33-amino-acid chain: Photosystem II reaction center protein Psb30 (33 aa).

The helical transmembrane segment at 7–27 (IQLGSLTLITLTGPLIIGIIF) threads the bilayer.

It belongs to the Psb30/Ycf12 family. As to quaternary structure, PSII is composed of 1 copy each of membrane proteins PsbA, PsbB, PsbC, PsbD, PsbE, PsbF, PsbH, PsbI, PsbJ, PsbK, PsbL, PsbM, PsbT, PsbY, PsbZ, Psb30/Ycf12, peripheral proteins of the oxygen-evolving complex and a large number of cofactors. It forms dimeric complexes.

The protein localises to the plastid. It localises to the chloroplast thylakoid membrane. Its function is as follows. A core subunit of photosystem II (PSII), probably helps stabilize the reaction center. The protein is Photosystem II reaction center protein Psb30 of Euglena gracilis.